A 277-amino-acid chain; its full sequence is Large ribosomal subunit protein uL2 (277 aa).

Positions 219–277 (TVRGSVMNPNDHPHGGGEGKAPVGRKAPSTPWGKPALGLKTRNKKAKSNKLIVRRRNEK) are disordered. Basic residues predominate over residues 259–277 (TRNKKAKSNKLIVRRRNEK).

The protein belongs to the universal ribosomal protein uL2 family. As to quaternary structure, part of the 50S ribosomal subunit. Forms a bridge to the 30S subunit in the 70S ribosome.

Functionally, one of the primary rRNA binding proteins. Required for association of the 30S and 50S subunits to form the 70S ribosome, for tRNA binding and peptide bond formation. It has been suggested to have peptidyltransferase activity; this is somewhat controversial. Makes several contacts with the 16S rRNA in the 70S ribosome. This is Large ribosomal subunit protein uL2 from Streptococcus equi subsp. zooepidemicus (strain MGCS10565).